Reading from the N-terminus, the 661-residue chain is Heme transporter BhuA (661 aa).

The signal sequence occupies residues 1–23 (MKFTRTLVLASTSLLATVATSQA). The TBDR plug domain maps to 48 to 159 (KDNIEATGGT…AAGAIRYETV (112 aa)). Residues 170–661 (TFGARIIGSY…TFTFQTAFKF (492 aa)) enclose the TBDR beta-barrel domain.

The protein belongs to the TonB-dependent receptor family.

It localises to the cell outer membrane. Its function is as follows. Heme transporter. The polypeptide is Heme transporter BhuA (bhuA) (Brucella abortus biovar 1 (strain 9-941)).